The sequence spans 561 residues: Cloacin (561 aa).

Composition is skewed to gly residues over residues 1–21, 29–40, and 66–91; these read MSGG…GGQA, SGKGGPSSGGGT, and FGNG…GGGQ. Disordered stretches follow at residues 1–93, 254–273, 304–326, 432–507, and 530–561; these read MSGG…GQSS, PKGI…TAGG, VKQR…PEEG, KAAL…KRAR, and RASD…KKYL. The interval 1-180 is involved in the translocation of the protein across the cell membrane; sequence MSGGDGRGPG…DTVTETPAST (180 aa). Residues 200-420 form a responsible for the receptor binding activity region; sequence DERQHIAVVA…NAKLKAAQAS (221 aa). 2 stretches are compositionally biased toward basic and acidic residues: residues 306 to 326 and 440 to 494; these read QRQE…PEEG and ESRK…EGKP. The ribonuclease activity stretch occupies residues 421 to 561; sequence LNAMNDALSR…DPKRNIKKYL (141 aa). A binding of immunity protein region spans residues 540–561; that stretch reads FDPKTGKQVKGPDPKRNIKKYL.

It belongs to the cloacin colicin family.

Its function is as follows. Inactivates ribosomes by hydrolyzing 16S RNA in 30S ribosomes at a specific site. Colicins are polypeptide toxins produced by and active against E.coli and closely related bacteria. The polypeptide is Cloacin (ccl) (Escherichia coli).